The sequence spans 296 residues: Pseudouridine-5'-phosphate glycosidase (296 aa).

Glutamate 21 (proton donor) is an active-site residue. Substrate contacts are provided by lysine 81 and valine 101. Aspartate 130 serves as a coordination point for Mn(2+). Residue 132–134 (SQD) coordinates substrate. The Nucleophile role is filled by lysine 151.

This sequence belongs to the pseudouridine-5'-phosphate glycosidase family. In terms of assembly, homotrimer. The cofactor is Mn(2+).

The enzyme catalyses D-ribose 5-phosphate + uracil = psi-UMP + H2O. Its function is as follows. Catalyzes the reversible cleavage of pseudouridine 5'-phosphate (PsiMP) to ribose 5-phosphate and uracil. Functions biologically in the cleavage direction, as part of a pseudouridine degradation pathway. This Fervidobacterium nodosum (strain ATCC 35602 / DSM 5306 / Rt17-B1) protein is Pseudouridine-5'-phosphate glycosidase.